Reading from the N-terminus, the 217-residue chain is Thiopurine S-methyltransferase (217 aa).

Residues tryptophan 11, leucine 46, glutamate 67, and arginine 122 each contribute to the S-adenosyl-L-methionine site.

The protein belongs to the class I-like SAM-binding methyltransferase superfamily. TPMT family.

The protein localises to the cytoplasm. It catalyses the reaction S-adenosyl-L-methionine + a thiopurine = S-adenosyl-L-homocysteine + a thiopurine S-methylether.. The chain is Thiopurine S-methyltransferase from Vibrio vulnificus (strain YJ016).